The sequence spans 308 residues: Methionyl-tRNA formyltransferase (308 aa).

107–110 (SLLP) provides a ligand contact to (6S)-5,6,7,8-tetrahydrofolate.

This sequence belongs to the Fmt family.

It carries out the reaction L-methionyl-tRNA(fMet) + (6R)-10-formyltetrahydrofolate = N-formyl-L-methionyl-tRNA(fMet) + (6S)-5,6,7,8-tetrahydrofolate + H(+). Attaches a formyl group to the free amino group of methionyl-tRNA(fMet). The formyl group appears to play a dual role in the initiator identity of N-formylmethionyl-tRNA by promoting its recognition by IF2 and preventing the misappropriation of this tRNA by the elongation apparatus. This chain is Methionyl-tRNA formyltransferase, found in Carboxydothermus hydrogenoformans (strain ATCC BAA-161 / DSM 6008 / Z-2901).